Here is a 450-residue protein sequence, read N- to C-terminus: Glutamyl-tRNA reductase (450 aa).

Substrate contacts are provided by residues 50-53 (TCNR), Ser109, 114-116 (EPQ), and Gln120. Catalysis depends on Cys51, which acts as the Nucleophile. 189–194 (GAGEMA) serves as a coordination point for NADP(+). The interval 422 to 450 (NEPEQPEAHKNRKRPQPDLPAGCPGKTIL) is disordered.

It belongs to the glutamyl-tRNA reductase family. Homodimer.

The enzyme catalyses (S)-4-amino-5-oxopentanoate + tRNA(Glu) + NADP(+) = L-glutamyl-tRNA(Glu) + NADPH + H(+). The protein operates within porphyrin-containing compound metabolism; protoporphyrin-IX biosynthesis; 5-aminolevulinate from L-glutamyl-tRNA(Glu): step 1/2. Its function is as follows. Catalyzes the NADPH-dependent reduction of glutamyl-tRNA(Glu) to glutamate 1-semialdehyde (GSA). This Oleidesulfovibrio alaskensis (strain ATCC BAA-1058 / DSM 17464 / G20) (Desulfovibrio alaskensis) protein is Glutamyl-tRNA reductase.